A 572-amino-acid polypeptide reads, in one-letter code: 2-succinyl-5-enolpyruvyl-6-hydroxy-3-cyclohexene-1-carboxylate synthase (572 aa).

The protein belongs to the TPP enzyme family. MenD subfamily. In terms of assembly, homodimer. Mg(2+) is required as a cofactor. Requires Mn(2+) as cofactor. Thiamine diphosphate serves as cofactor.

It carries out the reaction isochorismate + 2-oxoglutarate + H(+) = 5-enolpyruvoyl-6-hydroxy-2-succinyl-cyclohex-3-ene-1-carboxylate + CO2. Its pathway is quinol/quinone metabolism; 1,4-dihydroxy-2-naphthoate biosynthesis; 1,4-dihydroxy-2-naphthoate from chorismate: step 2/7. It participates in quinol/quinone metabolism; menaquinone biosynthesis. Functionally, catalyzes the thiamine diphosphate-dependent decarboxylation of 2-oxoglutarate and the subsequent addition of the resulting succinic semialdehyde-thiamine pyrophosphate anion to isochorismate to yield 2-succinyl-5-enolpyruvyl-6-hydroxy-3-cyclohexene-1-carboxylate (SEPHCHC). The chain is 2-succinyl-5-enolpyruvyl-6-hydroxy-3-cyclohexene-1-carboxylate synthase from Aeromonas salmonicida (strain A449).